A 312-amino-acid polypeptide reads, in one-letter code: Ribonuclease Z (312 aa).

Residues His63, His65, Asp67, His68, His141, Asp212, and His270 each contribute to the Zn(2+) site. Residue Asp67 is the Proton acceptor of the active site.

The protein belongs to the RNase Z family. In terms of assembly, homodimer. It depends on Zn(2+) as a cofactor.

The catalysed reaction is Endonucleolytic cleavage of RNA, removing extra 3' nucleotides from tRNA precursor, generating 3' termini of tRNAs. A 3'-hydroxy group is left at the tRNA terminus and a 5'-phosphoryl group is left at the trailer molecule.. In terms of biological role, zinc phosphodiesterase, which displays some tRNA 3'-processing endonuclease activity. Probably involved in tRNA maturation, by removing a 3'-trailer from precursor tRNA. The protein is Ribonuclease Z of Lactobacillus acidophilus (strain ATCC 700396 / NCK56 / N2 / NCFM).